Here is a 512-residue protein sequence, read N- to C-terminus: ETS translocation variant 3 (512 aa).

A DNA-binding region (ETS) is located at residues 35 to 116 (IQLWHFILEL…KGKRFTYKFN (82 aa)). A disordered region spans residues 136–222 (VPQSAPPVPT…NAIGGGGIGH (87 aa)). Phosphoserine is present on residues serine 139, serine 159, and serine 315. Residues 158 to 184 (HSPTNDVQPGRFSASSLTASGQESSNG) are compositionally biased toward polar residues. The disordered stretch occupies residues 336 to 512 (PEESTQFSIK…QGLATAAADA (177 aa)). Over residues 380–406 (IKVEPASEKDPESLRQSAREKEEHTQE) the composition is skewed to basic and acidic residues. Lysine 381 participates in a covalent cross-link: Glycyl lysine isopeptide (Lys-Gly) (interchain with G-Cter in SUMO2). Residue lysine 388 is modified to N6-acetyllysine; alternate. Residue lysine 388 forms a Glycyl lysine isopeptide (Lys-Gly) (interchain with G-Cter in SUMO2); alternate linkage. The segment covering 443-452 (EPLEVTEDIE) has biased composition (acidic residues). Basic and acidic residues-rich tracts occupy residues 453-468 (DRPGKEPSAPEKKEDA) and 479-491 (RWNDDPEARELSK).

It belongs to the ETS family.

It is found in the nucleus. Transcriptional repressor that contribute to growth arrest during terminal macrophage differentiation by repressing target genes involved in Ras-dependent proliferation. Represses MMP1 promoter activity. This chain is ETS translocation variant 3 (ETV3), found in Pan paniscus (Pygmy chimpanzee).